A 240-amino-acid polypeptide reads, in one-letter code: MRDRDRLLAAFSKDTGITLKPEQIAMIEAYTGLLLDYNQRVNLTAITDREEIWRKHVLDSLLLFLALEIPPAAKVIDIGTGAGIPGLILKIYRPDLEMALLESQNKKVAFLKKAVATLGLQGIECLWGRAEDIGRQKNYRESFDLAVSRGLAGMNTLAEYCLPFVRVGGFMIAYKGPGGEGELNAAARAIEILGGGTKKVWRGSLTGGQEVRQLIIIQKEHPTPPVYPRRPGLPAKRPLQ.

Residues Gly79, 130-131 (AE), and Arg149 contribute to the S-adenosyl-L-methionine site.

Belongs to the methyltransferase superfamily. RNA methyltransferase RsmG family.

It localises to the cytoplasm. Functionally, specifically methylates the N7 position of a guanine in 16S rRNA. The sequence is that of Ribosomal RNA small subunit methyltransferase G from Moorella thermoacetica (strain ATCC 39073 / JCM 9320).